A 424-amino-acid chain; its full sequence is UPF0597 protein Shewana3_2972 (424 aa).

The protein belongs to the UPF0597 family.

This Shewanella sp. (strain ANA-3) protein is UPF0597 protein Shewana3_2972.